Consider the following 422-residue polypeptide: Anhydromevalonate phosphate decarboxylase (422 aa).

Mn(2+) is bound by residues N134 and E197. The active-site Proton acceptor is D244.

The protein belongs to the UbiD family. Prenylated FMN serves as cofactor. Mn(2+) is required as a cofactor.

It carries out the reaction (2E)-3-methyl-5-phosphooxypent-2-enoate + H(+) = isopentenyl phosphate + CO2. It functions in the pathway isoprenoid biosynthesis; isopentenyl diphosphate biosynthesis via mevalonate pathway. Its function is as follows. Catalyzes the conversion of trans-anhydromevalonate 5-phosphate (tAHMP) into isopentenyl phosphate. Involved in the archaeal mevalonate (MVA) pathway, which provides fundamental precursors for isoprenoid biosynthesis, such as isopentenyl diphosphate (IPP) and dimethylallyl diphosphate (DMAPP). This is Anhydromevalonate phosphate decarboxylase from Methanosarcina mazei (strain ATCC BAA-159 / DSM 3647 / Goe1 / Go1 / JCM 11833 / OCM 88) (Methanosarcina frisia).